The chain runs to 1133 residues: MDVLAEEFGNLTPEQLAAPIPTVEEKWRLLPAFLKVKGLVKQHIDSFNYFINVEIKKIMKANEKVTSDADPMWYLKYLNIYVGLPDVEESFNVTRPVSPHECRLRDMTYSAPITVDIEYTRGSQRIIRNALPIGRMPIMLRSSNCVLTGKTPAEFAKLNECPLDPGGYFIVKGVEKVILIQEQLSKNRIIVEADRKGAVGASVTSSTHEKKSRTNMAVKQGRFYLRHNTLSEDIPIVIIFKAMGVESDQEIVQMIGTEEHVMAAFGPSLEECQKAQIFTQMQALKYIGNKVRRQRMWGGGPKKTKIEEARELLASTILTHVPVKEFNFRAKCIYTAVMVRRVILAQGDNKVDDRDYYGNKRLELAGQLLSLLFEDLFKKFNSEMKKIADQVIPKQRAAQFDVVKHMRQDQITNGMVNAISTGNWSLKRFKMDRQGVTQVLSRLSYISALGMMTRISSQFEKTRKVSGPRSLQPSQWGMLCPSDTPEGEACGLVKNLALMTHITTDMEDGPIVKLASNLGVEDVNLLCGEELSYPNVFLVFLNGNILGVIRDHKKLVNTFRLMRRAGYINEFVSISTNLTDRCVYISSDGGRLCRPYIIVKKQKPAVTNKHMEELAQGYRNFEDFLHESLVEYLDVNEENDCNIALYEHTINKDTTHLEIEPFTLLGVCAGLIPYPHHNQSPRNTYQCAMGKQAMGTIGYNQRNRIDTLMYLLAYPQKPMVKTKTIELIEFEKLPAGQNATVAVMSYSGYDIEDALVLNKASLDRGFGRCLVYKNAKCTLKRYTNQTFDKVMGPMLDAATRKPIWRHEILDADGICSPGEKVENKQVLVNKSMPTVTQIPLEGSNVPQQPQYKDVPITYKGATDSYIEKVMISSNAEDAFLIKMLLRQTRRPEIGDKFSSRHGQKGVCGLIVPQEDMPFCDSGICPDIIMNPHGFPSRMTVGKLIELLAGKAGVLDGRFHYGTAFGGSKVKDVCEDLVRHGYNYLGKDYVTSGITGEPLEAYIYFGPVYYQKLKHMVLDKMHARARGPRAVLTRQPTEGRSRDGGLRLGEMERDCLIGYGASMLLLERLMISSDAFEVDVCGQCGLLGYSGWCHYCKSSCHVSSLRIPYACKLLFQELQSMNIIPRLKLSKYNE.

K186 is an RNA binding site. A DNA-binding site is contributed by R195. RNA is bound at residue R213. D432 contributes to the DNA binding site. Residues Q438 and Q692 each coordinate RNA. D753 is a binding site for Mg(2+). Positions 896, 904, and 1019 each coordinate RNA. DNA is bound by residues R1039, S1040, and R1046. C1080, C1083, C1092, and C1095 together coordinate Zn(2+). The C4-type zinc-finger motif lies at 1080–1095; it reads CGQCGLLGYSGWCHYC.

It belongs to the RNA polymerase beta chain family. As to quaternary structure, component of the RNA polymerase III (Pol III) complex consisting of 17 subunits: a ten-subunit catalytic core composed of POLR3A/RPC1, POLR3B/RPC2, POLR1C/RPAC1, POLR1D/RPAC2, POLR3K/RPC10, POLR2E/RPABC1, POLR2F/RPABC2, POLR2H/RPABC3, POLR2K/RPABC4 and POLR2L/RPABC5; a mobile stalk composed of two subunits POLR3H/RPC8 and CRCP/RPC9, protruding from the core and functioning primarily in transcription initiation; and additional subunits homologous to general transcription factors of the RNA polymerase II machinery, POLR3C/RPC3-POLR3F/RPC6-POLR3G/RPC7 heterotrimer required for transcription initiation and POLR3D/RPC4-POLR3E/RPC5 heterodimer involved in both transcription initiation and termination. It depends on Mg(2+) as a cofactor.

The protein localises to the nucleus. It localises to the cytoplasm. It is found in the cytosol. It carries out the reaction RNA(n) + a ribonucleoside 5'-triphosphate = RNA(n+1) + diphosphate. Catalytic core component of RNA polymerase III (Pol III), a DNA-dependent RNA polymerase which synthesizes small non-coding RNAs using the four ribonucleoside triphosphates as substrates. Synthesizes 5S rRNA, snRNAs, tRNAs and miRNAs from at least 500 distinct genomic loci. Pol III-mediated transcription cycle proceeds through transcription initiation, transcription elongation and transcription termination stages. During transcription initiation, Pol III is recruited to DNA promoters type I, II or III with the help of general transcription factors and other specific initiation factors. Once the polymerase has escaped from the promoter it enters the elongation phase during which RNA is actively polymerized, based on complementarity with the template DNA strand. Transcription termination involves the release of the RNA transcript and polymerase from the DNA. Forms Pol III active center together with the largest subunit POLR3A/RPC1. A single-stranded DNA template strand of the promoter is positioned within the central active site cleft of Pol III. Appends one nucleotide at a time to the 3' end of the nascent RNA, with POLR3A/RPC1 contributing a Mg(2+)-coordinating DxDGD motif, and POLR3B/RPC2 participating in the coordination of a second Mg(2+) ion and providing lysine residues believed to facilitate Watson-Crick base pairing between the incoming nucleotide and template base. Typically, Mg(2+) ions direct a 5' nucleoside triphosphate to form a phosphodiester bond with the 3' hydroxyl of the preceding nucleotide of the nascent RNA, with the elimination of pyrophosphate. Pol III plays a key role in sensing and limiting infection by intracellular bacteria and DNA viruses. Acts as a nuclear and cytosolic DNA sensor involved in innate immune response. Can sense non-self dsDNA that serves as template for transcription into dsRNA. The non-self RNA polymerase III transcripts, such as Epstein-Barr virus-encoded RNAs (EBERs) induce type I interferon and NF-kappa-B through the RIG-I pathway. In Homo sapiens (Human), this protein is DNA-directed RNA polymerase III subunit RPC2.